We begin with the raw amino-acid sequence, 601 residues long: Zinc finger CCCH domain-containing protein 33 (601 aa).

ANK repeat units lie at residues 71 to 101 (ERRT…EAAR) and 106 to 138 (DGAT…SVDA). Residues 167-180 (PAVSPSSSPKKSAS) are compositionally biased toward low complexity. The tract at residues 167-203 (PAVSPSSSPKKSASPPSPPPPQEAKKEYPPDLTLPDL) is disordered. 2 consecutive C3H1-type zinc fingers follow at residues 252-280 (SYSC…HGVF) and 288-312 (QYRT…HKPD).

The sequence is that of Zinc finger CCCH domain-containing protein 33 from Oryza sativa subsp. japonica (Rice).